Here is a 571-residue protein sequence, read N- to C-terminus: Putative phospholipase B-like 1 (571 aa).

The signal sequence occupies residues 1–18 (MNWIFIFLAAAVAIGCEA). N-linked (GlcNAc...) asparagine glycosylation is found at N62, N149, N442, and N473.

Belongs to the phospholipase B-like family.

The protein localises to the lysosome. Functionally, putative phospholipase. The polypeptide is Putative phospholipase B-like 1 (Caenorhabditis elegans).